Here is a 409-residue protein sequence, read N- to C-terminus: MNVSAIVVEYNPMHNGHLYHIKKTKKLTNCDALVCIMSGNFVQRGFPSILDKWTKANMAISNGVDLVIELPTLYSLSSAEFFSFGAVSILDSLNIINSICFGSEIGNINALQDIATTLLEEPLEYKILLKNYLDKGISFAKARNLALVELNRDNKIMSENINKILSLSNNILGIEYLKSLLLLNSSIKPFTITREGADYKDENLHEEYSSASSIRKYLKENKNINILKDFLPLEGFLEFKRLITKGYNFSMEDSMINYIRYKYISGYKNLHNLIDVSEGLDNRIYKSLEKNFTYDSLVGEIKSKRYAYSRIGRILCQYFIGFENYDLNSLLKSTPNYMRVLASNEMGLKVLKKIKKHSSTNIYTKLPKNTNTLLSLDIKATNAYSLLNNNIRFNEDYFRSPTIIKNTIY.

ATP contacts are provided by residues 7 to 20 (VVEY…HLYH), Gly102, Asn169, and Arg194.

Belongs to the TmcAL family.

It is found in the cytoplasm. The catalysed reaction is cytidine(34) in elongator tRNA(Met) + acetate + ATP = N(4)-acetylcytidine(34) in elongator tRNA(Met) + AMP + diphosphate. Its function is as follows. Catalyzes the formation of N(4)-acetylcytidine (ac(4)C) at the wobble position of elongator tRNA(Met), using acetate and ATP as substrates. First activates an acetate ion to form acetyladenylate (Ac-AMP) and then transfers the acetyl group to tRNA to form ac(4)C34. This is tRNA(Met) cytidine acetate ligase from Clostridium botulinum (strain ATCC 19397 / Type A).